The chain runs to 304 residues: Phosphoribosylaminoimidazole-succinocarboxamide synthase (304 aa).

The protein belongs to the SAICAR synthetase family.

The catalysed reaction is 5-amino-1-(5-phospho-D-ribosyl)imidazole-4-carboxylate + L-aspartate + ATP = (2S)-2-[5-amino-1-(5-phospho-beta-D-ribosyl)imidazole-4-carboxamido]succinate + ADP + phosphate + 2 H(+). The protein operates within purine metabolism; IMP biosynthesis via de novo pathway; 5-amino-1-(5-phospho-D-ribosyl)imidazole-4-carboxamide from 5-amino-1-(5-phospho-D-ribosyl)imidazole-4-carboxylate: step 1/2. This Streptomyces griseus subsp. griseus (strain JCM 4626 / CBS 651.72 / NBRC 13350 / KCC S-0626 / ISP 5235) protein is Phosphoribosylaminoimidazole-succinocarboxamide synthase.